Consider the following 254-residue polypeptide: Ribonuclease PH (254 aa).

Residues R86 and 124-126 (GTR) each bind phosphate.

The protein belongs to the RNase PH family. Homohexameric ring arranged as a trimer of dimers.

The catalysed reaction is tRNA(n+1) + phosphate = tRNA(n) + a ribonucleoside 5'-diphosphate. In terms of biological role, phosphorolytic 3'-5' exoribonuclease that plays an important role in tRNA 3'-end maturation. Removes nucleotide residues following the 3'-CCA terminus of tRNAs; can also add nucleotides to the ends of RNA molecules by using nucleoside diphosphates as substrates, but this may not be physiologically important. Probably plays a role in initiation of 16S rRNA degradation (leading to ribosome degradation) during starvation. This chain is Ribonuclease PH, found in Carboxydothermus hydrogenoformans (strain ATCC BAA-161 / DSM 6008 / Z-2901).